The primary structure comprises 482 residues: 3-isopropylmalate dehydratase large subunit (482 aa).

Residues Cys-353, Cys-414, and Cys-417 each coordinate [4Fe-4S] cluster.

The protein belongs to the aconitase/IPM isomerase family. LeuC type 1 subfamily. In terms of assembly, heterodimer of LeuC and LeuD. The cofactor is [4Fe-4S] cluster.

It catalyses the reaction (2R,3S)-3-isopropylmalate = (2S)-2-isopropylmalate. It participates in amino-acid biosynthesis; L-leucine biosynthesis; L-leucine from 3-methyl-2-oxobutanoate: step 2/4. Catalyzes the isomerization between 2-isopropylmalate and 3-isopropylmalate, via the formation of 2-isopropylmaleate. The sequence is that of 3-isopropylmalate dehydratase large subunit from Xanthomonas oryzae pv. oryzae (strain MAFF 311018).